We begin with the raw amino-acid sequence, 778 residues long: Probable glutamine--tRNA ligase (778 aa).

Residues 188–205 show a composition bias toward basic and acidic residues; it reads LKPQTKANDKPKAAKPKA. A disordered region spans residues 188–219; sequence LKPQTKANDKPKAAKPKAEVTPAAQTAEAASD. Residues 273–283 carry the 'HIGH' region motif; sequence PEPNGILHIGH. ATP-binding positions include 274-276 and 280-286; these read EPN and HIGHAKA. L-glutamine is bound by residues Asp-306 and Tyr-441. ATP-binding positions include Thr-460, 489–490, and 497–499; these read RL and VSK. The short motif at 496 to 500 is the 'KMSKS' region element; the sequence is LVSKR.

The protein belongs to the class-I aminoacyl-tRNA synthetase family.

The enzyme catalyses tRNA(Gln) + L-glutamine + ATP = L-glutaminyl-tRNA(Gln) + AMP + diphosphate. This chain is Probable glutamine--tRNA ligase, found in Drosophila melanogaster (Fruit fly).